Here is a 382-residue protein sequence, read N- to C-terminus: Lipid-A-disaccharide synthase (382 aa).

Belongs to the LpxB family.

The enzyme catalyses 2-N,3-O-bis[(3R)-3-hydroxytetradecanoyl]-alpha-D-glucosaminyl 1-phosphate + UDP-2-N,3-O-bis[(3R)-3-hydroxytetradecanoyl]-alpha-D-glucosamine = lipid A disaccharide (E. coli) + UDP + H(+). The catalysed reaction is a lipid X + a UDP-2-N,3-O-bis[(3R)-3-hydroxyacyl]-alpha-D-glucosamine = a lipid A disaccharide + UDP + H(+). Its pathway is glycolipid biosynthesis; lipid IV(A) biosynthesis; lipid IV(A) from (3R)-3-hydroxytetradecanoyl-[acyl-carrier-protein] and UDP-N-acetyl-alpha-D-glucosamine: step 5/6. Its function is as follows. Condensation of UDP-2,3-diacylglucosamine and 2,3-diacylglucosamine-1-phosphate to form lipid A disaccharide, a precursor of lipid A, a phosphorylated glycolipid that anchors the lipopolysaccharide to the outer membrane of the cell. This is Lipid-A-disaccharide synthase from Salmonella paratyphi B (strain ATCC BAA-1250 / SPB7).